The sequence spans 426 residues: Immunoglobulin mu Fc receptor (426 aa).

Positions 1–16 are cleaved as a signal peptide; the sequence is MNLWLWLLYFLPVSGT. Positions 24–121 constitute an Ig-like domain; it reads RLEVELGGSV…GKTQKVTLNV (98 aa). 2 disulfides stabilise this stretch: Cys-37-Cys-103 and Cys-49-Cys-58. Thr-91 carries the post-translational modification Phosphothreonine. A disordered region spans residues 178–212; that stretch reads KTEAPPVHQPSTNTSVSRHPRVYGASSETPTKPSA. The helical transmembrane segment at 267 to 287 threads the bilayer; that stretch reads FHILIPTFLGFLLLVLLGLVV. 2 disordered regions span residues 306-346 and 401-426; these read RRMR…REPD and DSND…PSRQ. Pro residues predominate over residues 415-426; it reads PSKPPGPRPSRQ.

As to quaternary structure, interacts (via Ig-like domain) with IGHM (via CH4/Cmu4 domain), both secreted and membrane-bound IgM; the interaction is glycan-independent and multivalent theoretically involving up to eight binding sites for the IgM pentamer. In terms of processing, phosphorylated on both Tyr and Ser residues. O-glycosylated. Sialylated. O-linked glycans regulate trafficking to the plasma membrane.

The protein resides in the cell membrane. It is found in the early endosome membrane. It localises to the golgi apparatus. Its subcellular location is the trans-Golgi network membrane. The protein localises to the lysosome membrane. High-affinity Fc receptor for immunoglobulin M (IgM), both secreted and membrane-bound IgM. Primarily regulates IgM transport and homeostasis. In lymphoid cells, enables exocytosis of membrane-bound IgM on the plasma membrane as well as endocytosis of IgM-antigen complexes toward lysosomes for degradation. In mucosal epithelium, mediates retrotranscytosis of antigen-IgM complexes across mucosal M cells toward antigen-presenting cells in mucosal lymphoid tissues. Triggers costimulatory signaling and mediates most of IgM effector functions involved in B cell development and primary immune response to infection. Likely limits tonic IgM BCR signaling to self-antigens for proper negative selection of autoreactive B cells in the bone marrow and for the maintenance of regulatory B cell pool in peripheral lymphoid organs. Mediates antibody responses to T cell-dependent and T cell-independent antigens and promotes induction of an efficient neutralizing IgG response. Engages in cross-talk with antigen-receptor signaling via the non-canonical NF-kappa-B, MAP kinases and calcium signaling pathways. The chain is Immunoglobulin mu Fc receptor from Rattus norvegicus (Rat).